The sequence spans 94 residues: UPF0298 protein SEQ_1830 (94 aa).

Belongs to the UPF0298 family.

The protein resides in the cytoplasm. The polypeptide is UPF0298 protein SEQ_1830 (Streptococcus equi subsp. equi (strain 4047)).